The chain runs to 155 residues: MGQDNIKVIARNKKARHDFFIEETYESGIILRGTEIKSVREGRVNLKDSFALVENGEVFLYNMHISPYKQGNRYNHDPGRKRKLLLHKSEIRKLIGKTKQRGYSLVPLSIYLKNNLAKIELALAKGKKKYDKRQEIAKKTAEREIRRAFKERQRY.

It belongs to the SmpB family.

It is found in the cytoplasm. Functionally, required for rescue of stalled ribosomes mediated by trans-translation. Binds to transfer-messenger RNA (tmRNA), required for stable association of tmRNA with ribosomes. tmRNA and SmpB together mimic tRNA shape, replacing the anticodon stem-loop with SmpB. tmRNA is encoded by the ssrA gene; the 2 termini fold to resemble tRNA(Ala) and it encodes a 'tag peptide', a short internal open reading frame. During trans-translation Ala-aminoacylated tmRNA acts like a tRNA, entering the A-site of stalled ribosomes, displacing the stalled mRNA. The ribosome then switches to translate the ORF on the tmRNA; the nascent peptide is terminated with the 'tag peptide' encoded by the tmRNA and targeted for degradation. The ribosome is freed to recommence translation, which seems to be the essential function of trans-translation. This Halothermothrix orenii (strain H 168 / OCM 544 / DSM 9562) protein is SsrA-binding protein.